The sequence spans 81 residues: Small cysteine-rich protein 6 (81 aa).

Residues 1–23 (MDTKVACLLLIILGALTVQGAVS) form the signal peptide. Residues 24-25 (GN) constitute a propeptide that is removed on maturation.

It belongs to the Cnidaria small cysteine-rich protein (SCRiP) family. beta subfamily. Contains 4 disulfide bonds.

The protein resides in the secreted. It is found in the nematocyst. In terms of biological role, induces neurotoxic symptoms on zebrafish. Has also been claimed to be implied in calcification, but tests on homolog proteins suggest that proteins of this family have a neurotoxic function and not a calcification function. The protein is Small cysteine-rich protein 6 of Orbicella faveolata (Mountainous star coral).